Here is a 79-residue protein sequence, read N- to C-terminus: Sec-independent protein translocase protein TatA (79 aa).

The chain crosses the membrane as a helical span at residues 1–21 (MGEFSLTHILLLAVIFLIFFG). The disordered stretch occupies residues 52 to 79 (DIHDNQQVSHQNKQSMGQTQKQGENQNS). The span at 56-79 (NQQVSHQNKQSMGQTQKQGENQNS) shows a compositional bias: polar residues.

This sequence belongs to the TatA/E family. As to quaternary structure, the Tat system comprises two distinct complexes: a TatABC complex, containing multiple copies of TatA, TatB and TatC subunits, and a separate TatA complex, containing only TatA subunits. Substrates initially bind to the TatABC complex, which probably triggers association of the separate TatA complex to form the active translocon.

The protein localises to the cell inner membrane. Functionally, part of the twin-arginine translocation (Tat) system that transports large folded proteins containing a characteristic twin-arginine motif in their signal peptide across membranes. TatA could form the protein-conducting channel of the Tat system. This chain is Sec-independent protein translocase protein TatA, found in Bdellovibrio bacteriovorus (strain ATCC 15356 / DSM 50701 / NCIMB 9529 / HD100).